The primary structure comprises 85 residues: Protein WIR1B (85 aa).

Over 1 to 12 (MASHSAAGRRPT) the chain is Cytoplasmic. Residues 13–34 (ALVHIALFVAIAAVIINSSVCL) traverse the membrane as a helical segment. The Extracellular segment spans residues 35-85 (GAAVHDAATSGTGALDPNVPAVPTPGGAGQPYTGRGCRTVYGCKPPAGSQP).

It localises to the membrane. Its function is as follows. Associated with pathogen defense. This is Protein WIR1B (WIR1B) from Triticum aestivum (Wheat).